Reading from the N-terminus, the 282-residue chain is NADPH-dependent 7-cyano-7-deazaguanine reductase (282 aa).

88–90 (IES) is a binding site for substrate. 90–91 (SK) serves as a coordination point for NADPH. Catalysis depends on Cys190, which acts as the Thioimide intermediate. Asp197 acts as the Proton donor in catalysis. Substrate is bound at residue 229-230 (HE). An NADPH-binding site is contributed by 258–259 (RG).

It belongs to the GTP cyclohydrolase I family. QueF type 2 subfamily. Homodimer.

It is found in the cytoplasm. The enzyme catalyses 7-aminomethyl-7-carbaguanine + 2 NADP(+) = 7-cyano-7-deazaguanine + 2 NADPH + 3 H(+). It functions in the pathway tRNA modification; tRNA-queuosine biosynthesis. Functionally, catalyzes the NADPH-dependent reduction of 7-cyano-7-deazaguanine (preQ0) to 7-aminomethyl-7-deazaguanine (preQ1). In Salmonella paratyphi A (strain ATCC 9150 / SARB42), this protein is NADPH-dependent 7-cyano-7-deazaguanine reductase.